Reading from the N-terminus, the 524-residue chain is Anthranilate synthase component 1 (524 aa).

The span at 1–16 shows a compositional bias: polar residues; that stretch reads MQTTANHSSRSTQTGT. The segment at 1 to 25 is disordered; it reads MQTTANHSSRSTQTGTRAHGAALAE. Residues Ser-74 and 298–300 each bind L-tryptophan; that span reads PYM. 339–340 is a binding site for chorismate; sequence GT. Lys-355 participates in a covalent cross-link: Isoglutamyl lysine isopeptide (Lys-Gln) (interchain with Q-Cter in protein Pup). A Mg(2+)-binding site is contributed by Glu-366. Residues Tyr-454, Arg-474, 488–490, and Gly-490 each bind chorismate; that span reads GGG. Residue Glu-503 participates in Mg(2+) binding.

Belongs to the anthranilate synthase component I family. As to quaternary structure, heterotetramer consisting of two non-identical subunits: a beta subunit (TrpG) and a large alpha subunit (TrpE). Mg(2+) is required as a cofactor.

The enzyme catalyses chorismate + L-glutamine = anthranilate + pyruvate + L-glutamate + H(+). The protein operates within amino-acid biosynthesis; L-tryptophan biosynthesis; L-tryptophan from chorismate: step 1/5. With respect to regulation, feedback inhibited by tryptophan. In terms of biological role, part of a heterotetrameric complex that catalyzes the two-step biosynthesis of anthranilate, an intermediate in the biosynthesis of L-tryptophan. In the first step, the glutamine-binding beta subunit (TrpG) of anthranilate synthase (AS) provides the glutamine amidotransferase activity which generates ammonia as a substrate that, along with chorismate, is used in the second step, catalyzed by the large alpha subunit of AS (TrpE) to produce anthranilate. In the absence of TrpG, TrpE can synthesize anthranilate directly from chorismate and high concentrations of ammonia. In Mycolicibacterium smegmatis (strain ATCC 700084 / mc(2)155) (Mycobacterium smegmatis), this protein is Anthranilate synthase component 1 (trpE).